A 63-amino-acid polypeptide reads, in one-letter code: MPKMKTVRGAAKRFKVGKNKIKRGSAFRSHILTKMSQTRKRDLRGPQFVDKTNVAAVKKMLCK.

Belongs to the bacterial ribosomal protein bL35 family.

The polypeptide is Large ribosomal subunit protein bL35 (Campylobacter hominis (strain ATCC BAA-381 / DSM 21671 / CCUG 45161 / LMG 19568 / NCTC 13146 / CH001A)).